A 399-amino-acid chain; its full sequence is Lysosomal acid lipase/cholesteryl ester hydrolase (399 aa).

The N-terminal stretch at 1–27 is a signal peptide; that stretch reads MKMRFLGLVVCLVLWTLHSEASGGKLT. The propeptide at 28-76 is removed in mature form; the sequence is AVNPETNMNVSEIISYWGFPSEEYLVETEDGYILCLNRIPHGRKNHSDK. Asn36, Asn72, Asn101, and Asn161 each carry an N-linked (GlcNAc...) asparagine glycan. In terms of domain architecture, AB hydrolase-1 spans 80–380; the sequence is PVVFLQHGLL…EWEHLDFIWG (301 aa). The Charge relay system role is filled by Ser174. Residues Asn273 and Asn321 are each glycosylated (N-linked (GlcNAc...) asparagine). His374 serves as the catalytic Charge relay system.

This sequence belongs to the AB hydrolase superfamily. Lipase family. As to quaternary structure, monomer. Post-translationally, glycosylation is not essential for catalytic activity.

It is found in the lysosome. The enzyme catalyses a sterol ester + H2O = a sterol + a fatty acid + H(+). It catalyses the reaction cholesteryl (9Z-octadecenoate) + H2O = cholesterol + (9Z)-octadecenoate + H(+). The catalysed reaction is a triacylglycerol + H2O = a 1,2-diacylglycerol + a fatty acid + H(+). It carries out the reaction 1,2-di-(9Z-octadecenoyl)-glycerol + (9Z)-octadecenoate + H(+) = 1,2,3-tri-(9Z-octadecenoyl)-glycerol + H2O. The enzyme catalyses a 1,2-diacylglycerol + H2O = a 1-acylglycerol + a fatty acid + H(+). It catalyses the reaction 1,2-di-(9Z-octadecenoyl)-glycerol + H2O = 1-(9Z-octadecenoyl)-glycerol + (9Z)-octadecenoate + H(+). The catalysed reaction is a 1,3-diacylglycerol + H2O = a 1-acylglycerol + a fatty acid + H(+). It carries out the reaction 1,3-di-(9Z-octadecenoyl)-glycerol + H2O = 1-(9Z-octadecenoyl)-glycerol + (9Z)-octadecenoate + H(+). Functionally, catalyzes the deacylation of cholesteryl ester core lipids of endocytosed low density lipoproteins to generate free fatty acids and cholesterol. Hydrolyzes triglycerides (1,2,3-triacylglycerol) and diglycerides (such as 1,2-diacylglycerol and 1,3-diacylglycerol) with preference for the acyl moieties at the sn-1 or sn-3 positions. The protein is Lysosomal acid lipase/cholesteryl ester hydrolase (LIPA) of Macaca fascicularis (Crab-eating macaque).